Here is a 146-residue protein sequence, read N- to C-terminus: Hemoglobin subunit beta (146 aa).

Val-1 carries the N-acetylvaline modification. The 145-residue stretch at His-2–His-146 folds into the Globin domain. Position 59 is an N6-acetyllysine (Lys-59). His-63 is a binding site for heme b. N6-acetyllysine is present on Lys-82. His-92 provides a ligand contact to heme b. Cys-93 carries the post-translational modification S-nitrosocysteine. At Lys-144 the chain carries N6-acetyllysine.

It belongs to the globin family. In terms of assembly, heterotetramer of two alpha chains and two beta chains. In terms of tissue distribution, red blood cells.

Its function is as follows. Involved in oxygen transport from the lung to the various peripheral tissues. The sequence is that of Hemoglobin subunit beta (HBB) from Trichechus inunguis (Amazon manatee).